A 456-amino-acid chain; its full sequence is tRNA-2-methylthio-N(6)-dimethylallyladenosine synthase (456 aa).

An MTTase N-terminal domain is found at 3–120 (KKVYVKTFGC…LPQMIDQRRA (118 aa)). Cys-12, Cys-49, Cys-83, Cys-157, Cys-161, and Cys-164 together coordinate [4Fe-4S] cluster. Positions 143–377 (RIDGPSAFVS…QATIEENVQR (235 aa)) constitute a Radical SAM core domain. Residues 380 to 447 (QAMVGKVERI…PHSLRGELVM (68 aa)) enclose the TRAM domain.

It belongs to the methylthiotransferase family. MiaB subfamily. As to quaternary structure, monomer. It depends on [4Fe-4S] cluster as a cofactor.

The protein localises to the cytoplasm. The enzyme catalyses N(6)-dimethylallyladenosine(37) in tRNA + (sulfur carrier)-SH + AH2 + 2 S-adenosyl-L-methionine = 2-methylsulfanyl-N(6)-dimethylallyladenosine(37) in tRNA + (sulfur carrier)-H + 5'-deoxyadenosine + L-methionine + A + S-adenosyl-L-homocysteine + 2 H(+). Functionally, catalyzes the methylthiolation of N6-(dimethylallyl)adenosine (i(6)A), leading to the formation of 2-methylthio-N6-(dimethylallyl)adenosine (ms(2)i(6)A) at position 37 in tRNAs that read codons beginning with uridine. The sequence is that of tRNA-2-methylthio-N(6)-dimethylallyladenosine synthase from Paraburkholderia phymatum (strain DSM 17167 / CIP 108236 / LMG 21445 / STM815) (Burkholderia phymatum).